The chain runs to 644 residues: Phosphomethylpyrimidine synthase (644 aa).

Substrate-binding positions include Asn236, Met265, Tyr294, His330, 350 to 352 (SRG), 391 to 394 (DGLR), and Glu430. His434 is a Zn(2+) binding site. Tyr457 contributes to the substrate binding site. Position 498 (His498) interacts with Zn(2+). Positions 578, 581, and 586 each coordinate [4Fe-4S] cluster.

It belongs to the ThiC family. Homodimer. [4Fe-4S] cluster serves as cofactor.

It catalyses the reaction 5-amino-1-(5-phospho-beta-D-ribosyl)imidazole + S-adenosyl-L-methionine = 4-amino-2-methyl-5-(phosphooxymethyl)pyrimidine + CO + 5'-deoxyadenosine + formate + L-methionine + 3 H(+). It participates in cofactor biosynthesis; thiamine diphosphate biosynthesis. Catalyzes the synthesis of the hydroxymethylpyrimidine phosphate (HMP-P) moiety of thiamine from aminoimidazole ribotide (AIR) in a radical S-adenosyl-L-methionine (SAM)-dependent reaction. The sequence is that of Phosphomethylpyrimidine synthase from Aliivibrio fischeri (strain ATCC 700601 / ES114) (Vibrio fischeri).